The primary structure comprises 406 residues: Argininosuccinate synthase (406 aa).

ATP-binding positions include 12–20 (AYSGGLDTS) and Ala-39. Residues Tyr-90 and Ser-95 each coordinate L-citrulline. Gly-120 is a binding site for ATP. 3 residues coordinate L-aspartate: Thr-122, Asn-126, and Asp-127. Asn-126 provides a ligand contact to L-citrulline. Positions 130, 179, 188, 264, and 276 each coordinate L-citrulline.

Belongs to the argininosuccinate synthase family. Type 1 subfamily. Homotetramer.

Its subcellular location is the cytoplasm. The catalysed reaction is L-citrulline + L-aspartate + ATP = 2-(N(omega)-L-arginino)succinate + AMP + diphosphate + H(+). It functions in the pathway amino-acid biosynthesis; L-arginine biosynthesis; L-arginine from L-ornithine and carbamoyl phosphate: step 2/3. This is Argininosuccinate synthase from Geotalea daltonii (strain DSM 22248 / JCM 15807 / FRC-32) (Geobacter daltonii).